The following is a 422-amino-acid chain: DNA-binding transcriptional activator AdeR (422 aa).

This sequence belongs to the CdaR family.

Functionally, activates ald expression in response to alanine availability and is important for normal sporulation in B.subtilis. In Bacillus subtilis (strain 168), this protein is DNA-binding transcriptional activator AdeR.